The following is a 721-amino-acid chain: BBSome complex member BBS2 (721 aa).

Residues 325 to 369 (KGNLLDTSVEQGLIRELSQKKQNLLLELRNYEENTKAELSSPLNE) are a coiled coil.

In terms of assembly, part of BBSome complex, that contains BBS1, BBS2, BBS4, BBS5, BBS7, BBS8/TTC8, BBS9 and BBIP10. Interacts (via C-terminus) with BBS7. Interacts (via coiled coil domain) with MKKS. Interacts with CCDC28B. Interacts with DLEC1.

Its subcellular location is the cell projection. It is found in the cilium membrane. It localises to the cytoplasm. The protein localises to the cytoskeleton. The protein resides in the microtubule organizing center. Its subcellular location is the centrosome. It is found in the centriolar satellite. The BBSome complex is thought to function as a coat complex required for sorting of specific membrane proteins to the primary cilia. The BBSome complex is required for ciliogenesis but is dispensable for centriolar satellite function. This ciliogenic function is mediated in part by the Rab8 GDP/GTP exchange factor, which localizes to the basal body and contacts the BBSome. Rab8(GTP) enters the primary cilium and promotes extension of the ciliary membrane. Firstly the BBSome associates with the ciliary membrane and binds to RAB3IP/Rabin8, the guanosyl exchange factor (GEF) for Rab8 and then the Rab8-GTP localizes to the cilium and promotes docking and fusion of carrier vesicles to the base of the ciliary membrane. The BBSome complex, together with the LTZL1, controls SMO ciliary trafficking and contributes to the sonic hedgehog (SHH) pathway regulation. Required for proper BBSome complex assembly and its ciliary localization. The polypeptide is BBSome complex member BBS2 (Bbs2) (Rattus norvegicus (Rat)).